Consider the following 273-residue polypeptide: Putative phosphoenolpyruvate synthase regulatory protein (273 aa).

153–160 (GVSRSGKT) provides a ligand contact to ADP.

Belongs to the pyruvate, phosphate/water dikinase regulatory protein family. PSRP subfamily.

The enzyme catalyses [pyruvate, water dikinase] + ADP = [pyruvate, water dikinase]-phosphate + AMP + H(+). It carries out the reaction [pyruvate, water dikinase]-phosphate + phosphate + H(+) = [pyruvate, water dikinase] + diphosphate. Functionally, bifunctional serine/threonine kinase and phosphorylase involved in the regulation of the phosphoenolpyruvate synthase (PEPS) by catalyzing its phosphorylation/dephosphorylation. The chain is Putative phosphoenolpyruvate synthase regulatory protein from Variovorax paradoxus (strain S110).